A 354-amino-acid chain; its full sequence is uncharacterized protein (354 aa).

Positions 309-326 (VNSANSINTANTRSQTGG) are enriched in polar residues. Residues 309-333 (VNSANSINTANTRSQTGGQDEEDFE) are disordered. Residues 326-353 (GQDEEDFEKKYKKYKNKYAKLKNQKTSN) are a coiled coil.

It is found in the virion. This is an uncharacterized protein from Acanthamoeba polyphaga (Amoeba).